We begin with the raw amino-acid sequence, 340 residues long: Leucine-rich repeat-containing protein 23 (340 aa).

Over residues 1–27 (MSDEDDVDDVDAEQDEVESDKEIEEWE) the composition is skewed to acidic residues. Positions 1-38 (MSDEDDVDDVDAEQDEVESDKEIEEWEDYRKETEEASE) are disordered. LRR repeat units follow at residues 89-110 (HLRYVDISENHITDISPLNSLT), 111-134 (HLLWLKADGNQLRSARMNELPYLQ), 177-197 (SLHTLELRGNQLESTKGIYLP), 198-219 (KLKNLYLAQNLLKKVEGLENLS), 220-241 (NLTTLHLRDNQIETLNGFSQEM), and 243-264 (SLQYLNLRSNMISDLAELAKLR). Positions 205 to 340 (AQNLLKKVEG…QDMEPYLPPV (136 aa)) are interaction with RSPH9. One can recognise an LRRCT domain in the interval 277–315 (NPCADETDYRQEALVQMAHLERLDKEFYEDDDRAEAEEI). A coiled-coil region spans residues 305–328 (EDDDRAEAEEIRQRLKEEQDQDLD). The disordered stretch occupies residues 317–340 (QRLKEEQDQDLDPDQDMEPYLPPV). Positions 323 to 333 (QDQDLDPDQDM) are enriched in acidic residues.

In terms of assembly, component of the axonemal radial spoke complex. Interacts with RSPH3A and RSPH3B. Interacts with RSPH9. In terms of tissue distribution, expressed in the testis (at protein level).

It localises to the cytoplasm. Its subcellular location is the cytoskeleton. The protein localises to the flagellum axoneme. Essential for sperm motility and male fertility. Plays an important role in the proper assembly of the third radial spoke (RS3) head and the bridge structure between RS2 and RS3 in the sperm flagella. The chain is Leucine-rich repeat-containing protein 23 (Lrrc23) from Mus musculus (Mouse).